The chain runs to 565 residues: Proline--tRNA ligase (565 aa).

Belongs to the class-II aminoacyl-tRNA synthetase family. ProS type 1 subfamily. As to quaternary structure, homodimer.

It localises to the cytoplasm. It carries out the reaction tRNA(Pro) + L-proline + ATP = L-prolyl-tRNA(Pro) + AMP + diphosphate. In terms of biological role, catalyzes the attachment of proline to tRNA(Pro) in a two-step reaction: proline is first activated by ATP to form Pro-AMP and then transferred to the acceptor end of tRNA(Pro). As ProRS can inadvertently accommodate and process non-cognate amino acids such as alanine and cysteine, to avoid such errors it has two additional distinct editing activities against alanine. One activity is designated as 'pretransfer' editing and involves the tRNA(Pro)-independent hydrolysis of activated Ala-AMP. The other activity is designated 'posttransfer' editing and involves deacylation of mischarged Ala-tRNA(Pro). The misacylated Cys-tRNA(Pro) is not edited by ProRS. This chain is Proline--tRNA ligase, found in Bacillus pumilus (strain SAFR-032).